Here is a 147-residue protein sequence, read N- to C-terminus: Deoxyuridine 5'-triphosphate nucleotidohydrolase (147 aa).

Substrate contacts are provided by residues 63–65 (RSG), asparagine 76, and 80–82 (TID).

The protein belongs to the dUTPase family. Mg(2+) is required as a cofactor.

The catalysed reaction is dUTP + H2O = dUMP + diphosphate + H(+). The protein operates within pyrimidine metabolism; dUMP biosynthesis; dUMP from dCTP (dUTP route): step 2/2. Its function is as follows. This enzyme is involved in nucleotide metabolism: it produces dUMP, the immediate precursor of thymidine nucleotides and it decreases the intracellular concentration of dUTP so that uracil cannot be incorporated into DNA. The protein is Deoxyuridine 5'-triphosphate nucleotidohydrolase of Chlamydia felis (strain Fe/C-56) (Chlamydophila felis).